The chain runs to 373 residues: 4-hydroxy-3-methylbut-2-en-1-yl diphosphate synthase (flavodoxin) (373 aa).

[4Fe-4S] cluster-binding residues include C270, C273, C305, and E312.

The protein belongs to the IspG family. It depends on [4Fe-4S] cluster as a cofactor.

The enzyme catalyses (2E)-4-hydroxy-3-methylbut-2-enyl diphosphate + oxidized [flavodoxin] + H2O + 2 H(+) = 2-C-methyl-D-erythritol 2,4-cyclic diphosphate + reduced [flavodoxin]. It participates in isoprenoid biosynthesis; isopentenyl diphosphate biosynthesis via DXP pathway; isopentenyl diphosphate from 1-deoxy-D-xylulose 5-phosphate: step 5/6. Functionally, converts 2C-methyl-D-erythritol 2,4-cyclodiphosphate (ME-2,4cPP) into 1-hydroxy-2-methyl-2-(E)-butenyl 4-diphosphate. The sequence is that of 4-hydroxy-3-methylbut-2-en-1-yl diphosphate synthase (flavodoxin) from Proteus mirabilis (strain HI4320).